The chain runs to 120 residues: Glycine cleavage system H protein (120 aa).

Residues 17 to 99 (VATVGITAHA…MGAGWFFKLK (83 aa)) form the Lipoyl-binding domain. Lysine 58 is subject to N6-lipoyllysine.

It belongs to the GcvH family. In terms of assembly, the glycine cleavage system is composed of four proteins: P, T, L and H. It depends on (R)-lipoate as a cofactor.

In terms of biological role, the glycine cleavage system catalyzes the degradation of glycine. The H protein shuttles the methylamine group of glycine from the P protein to the T protein. The polypeptide is Glycine cleavage system H protein (Rhizobium rhizogenes (strain K84 / ATCC BAA-868) (Agrobacterium radiobacter)).